The following is a 267-amino-acid chain: Adenosine 5'-phosphosulfate reductase (267 aa).

The tract at residues 1 to 29 is disordered; that stretch reads MPPFATIPATERNSAAQHQDPSPMSQPFD. The segment covering 11-25 has biased composition (polar residues); the sequence is ERNSAAQHQDPSPMS. [4Fe-4S] cluster contacts are provided by Cys139, Cys140, Cys228, and Cys231. Cys256 (nucleophile; cysteine thiosulfonate intermediate) is an active-site residue.

The protein belongs to the PAPS reductase family. CysH subfamily. Requires [4Fe-4S] cluster as cofactor.

It localises to the cytoplasm. It catalyses the reaction [thioredoxin]-disulfide + sulfite + AMP + 2 H(+) = adenosine 5'-phosphosulfate + [thioredoxin]-dithiol. The protein operates within sulfur metabolism; hydrogen sulfide biosynthesis; sulfite from sulfate. In terms of biological role, catalyzes the formation of sulfite from adenosine 5'-phosphosulfate (APS) using thioredoxin as an electron donor. This is Adenosine 5'-phosphosulfate reductase from Pseudomonas aeruginosa (strain LESB58).